Reading from the N-terminus, the 158-residue chain is Large ribosomal subunit protein uL16 (158 aa).

Belongs to the universal ribosomal protein uL16 family. Part of the 50S ribosomal subunit.

Its function is as follows. Binds 23S rRNA and is also seen to make contacts with the A and possibly P site tRNAs. This Synechococcus sp. (strain CC9605) protein is Large ribosomal subunit protein uL16.